The sequence spans 1984 residues: MAMLPPPGPQSFVHFTKQSLALIEQRISEEKAKGHKDEKKDDEEEGPKPSSDLEAGKQLPFIYGDIPPGMVSEPLEDLDPYYADKKTFIVLNKGKAIFRFNATPALYMLSPFSPLRRISIKILVHSLFSMLIMCTILTNCIFMTMSNPPDWTKNVEYTFTGIYTFESLIKILARGFCVGEFTFLRDPWNWLDFVVIVFAYLTEFVNLGNVSALRTFRVLRALKTISVIPGLKTIVGALIQSVKKLSDVMILTVFCLSVFALIGLQLFMGNLKHKCFRKDLEQNETLESIMSTAESEEELKRYFYYLEGSKDALLCGFSTDSGQCPEGYECVTAGRNPDYGYTSFDTFGWAFLALFRLMTQDYWENLYQQTLRAAGKTYMIFFVVVIFLGSFYLINLILAVVAMAYEEQNQANIEEAKQKELEFQQMLDRLKKEQEEAEAIAAAAAEYTSLGRSRIMGLSESSSETSRLSSKSAKERRNRRKKKKQKLSSGEEKGDDEKLSKSGSEESIRKKSFHLGVEGHHRAREKRLSTPNQSPLSIRGSLFSARRSSRTSLFSFKGRGRDLGSETEFADDEHSIFGDNESRRGSLFVPHRPRERRSSNISQASRSPPVLPVNGKMHSAVDCNGVVSLVDGPSALMLPNGQLLPEVIIDKATSDDSGTTNQMRKKRLSSSYFLSEDMLNDPHLRQRAMSRASILTNTVEELEESRQKCPPWWYRFAHTFLIWNCSPYWIKFKKFIYFIVMDPFVDLAITICIVLNTLFMAMEHHPMTDEFKNVLAVGNLVFTGIFAAEMVLKLIAMDPYEYFQVGWNIFDSLIVTLSLVELFLADVEGLSVLRSFRLLRVFKLAKSWPTLNMLIKIIGNSVGALGNLTLVLAIIVFIFAVVGMQLFGKSYKECVCKINENCKLPRWHMNDFFHSFLIVFRVLCGEWIETMWDCMEVAGQTMCLIVYMMVMVIGNLVVLNLFLALLLSSFSSDNLTAIEEDTDANNLQIAVARIKRGINYVKQTLREFILKSFSKKPKGSKDTKRTADPNNKRENYISNRTLAEISKDHNFLKEKDKISGFSSSLDKSFMDENDYQSFIHNPSLTVTVPIAPGESDLENMNTEELSSDSDSDYSKERRNRSSSSECSTVDNPLPGEEEAEAEPINADEPEACFTDGCVRRFPCCQVNIDSGKGKVWWTIRKTCYRIVEHSWFESFIVLMILLSSGALAFEDIYIEKKKTIKIILEYADKIFTYIFILEMLLKWVAYGYKTYFTNAWCWLDFLIVDVSLVTLVANTLGYSDLGPIKSLRTLRALRPLRALSRFEGMRVVVNALIGAIPSIMNVLLVCLIFWLIFSIMGVNLFAGKFYECVNTTDGSRFSVSQVANRSECFALMNVSGNVRWKNLKVNFDNVGLGYLSLLQVATFKGWMDIMYAAVDSVNVNAQPIYEYNLYMYIYFVIFIIFGSFFTLNLFIGVIIDNFNQQKKKLGGQDIFMTEEQKKYYNAMKKLGSKKPQKPIPRPGNKFQGCIFDLVTNQAFDITIMVLICLNMVTMMVEKEGQTDYMSFVLYWINVVFIILFTGECVLKLISLRHYYFTVGWNIFDFVVVILSIVGMFLAEMIEKYFVSPTLFRVIRLARIGRILRLIKGAKGIRTLLFALMMSLPALFNIGLLLFLVMFIYAIFGMSNFAYVKKEAGINDMFNFETFGNSMICLFQITTSAGWDGLLAPILNSAPPDCDPKKVHPGSSVEGDCGNPSVGIFYFVSYIIISFLVVVNMYIAVILENFSVATEESTEPLSEDDFEMFYEVWEKFDPDATQFIEFCKLSDFAAALDPPLLIAKPNKVQLIAMDLPMVSGDRIHCLDILFAFTKRVLGESGEMDSLRSQMEERFMSANPSKVSYEPITTTLKRKQEDVSATIIQRAYRRYRLRQNVKNISSIYIKDGDRDDDLPNKEDIVFDNVNENSSPEKTDATASTISPPSYDSVTKPDQEKYETDKTEKEDKEKDESRK.

At 1–125 (MAMLPPPGPQ…RRISIKILVH (125 aa)) the chain is on the cytoplasmic side. Basic and acidic residues predominate over residues 26–39 (RISEEKAKGHKDEK). The tract at residues 26–55 (RISEEKAKGHKDEKKDDEEEGPKPSSDLEA) is disordered. One copy of the I repeat lies at 112–410 (FSPLRRISIK…VAMAYEEQNQ (299 aa)). Residues 126–145 (SLFSMLIMCTILTNCIFMTM) traverse the membrane as a helical segment. The Extracellular segment spans residues 146–150 (SNPPD). Residues 151–172 (WTKNVEYTFTGIYTFESLIKIL) traverse the membrane as a helical segment. The Cytoplasmic segment spans residues 173 to 185 (ARGFCVGEFTFLR). A helical membrane pass occupies residues 186 to 204 (DPWNWLDFVVIVFAYLTEF). Over 205 to 210 (VNLGNV) the chain is Extracellular. The helical transmembrane segment at 211–227 (SALRTFRVLRALKTISV) threads the bilayer. Topologically, residues 228-241 (IPGLKTIVGALIQS) are cytoplasmic. The helical transmembrane segment at 242 to 267 (VKKLSDVMILTVFCLSVFALIGLQLF) threads the bilayer. Residues 268–346 (MGNLKHKCFR…PDYGYTSFDT (79 aa)) are Extracellular-facing. Cys-275 and Cys-324 are disulfide-bonded. Residues 347–363 (FGWAFLALFRLMTQDYW) constitute an intramembrane region (pore-forming). Residues 364–376 (ENLYQQTLRAAGK) are Extracellular-facing. A helical membrane pass occupies residues 377 to 402 (TYMIFFVVVIFLGSFYLINLILAVVA). Residues 402–449 (AMAYEEQNQANIEEAKQKELEFQQMLDRLKKEQEEAEAIAAAAAEYTS) adopt a coiled-coil conformation. The Cytoplasmic segment spans residues 403–744 (MAYEEQNQAN…FIYFIVMDPF (342 aa)). The segment covering 458–471 (LSESSSETSRLSSK) has biased composition (low complexity). 2 disordered regions span residues 458-540 (LSES…SIRG) and 574-609 (HSIF…RSPP). Residues 474–486 (KERRNRRKKKKQK) are compositionally biased toward basic residues. Composition is skewed to basic and acidic residues over residues 489–509 (SGEE…ESIR) and 574–584 (HSIFGDNESRR). The stretch at 684-708 (LRQRAMSRASILTNTVEELEESRQK) forms a coiled coil. An II repeat occupies 725-988 (CSPYWIKFKK…EEDTDANNLQ (264 aa)). Residues 745-761 (VDLAITICIVLNTLFMA) traverse the membrane as a helical segment. The Extracellular portion of the chain corresponds to 762–770 (MEHHPMTDE). A helical membrane pass occupies residues 771 to 795 (FKNVLAVGNLVFTGIFAAEMVLKLI). Topologically, residues 796–804 (AMDPYEYFQ) are cytoplasmic. Residues 805–821 (VGWNIFDSLIVTLSLVE) traverse the membrane as a helical segment. Over 822 to 830 (LFLADVEGL) the chain is Extracellular. The chain crosses the membrane as a helical span at residues 831-847 (SVLRSFRLLRVFKLAKS). Residues 848 to 864 (WPTLNMLIKIIGNSVGA) lie on the Cytoplasmic side of the membrane. Residues 865 to 887 (LGNLTLVLAIIVFIFAVVGMQLF) form a helical membrane-spanning segment. Residues 888–914 (GKSYKECVCKINENCKLPRWHMNDFFH) lie on the Extracellular side of the membrane. Residues Cys-896 and Cys-902 are joined by a disulfide bond. Positions 915-927 (SFLIVFRVLCGEW) form an intramembrane region, pore-forming. Residues 928–939 (IETMWDCMEVAG) are Extracellular-facing. A disulfide bridge links Cys-934 with Cys-943. Residues 940–966 (QTMCLIVYMMVMVIGNLVVLNLFLALL) form a helical membrane-spanning segment. At 967 to 1185 (LSSFSSDNLT…WWTIRKTCYR (219 aa)) the chain is on the cytoplasmic side. Disordered stretches follow at residues 1015–1039 (KKPK…YISN) and 1089–1145 (PIAP…EPIN). A compositionally biased stretch (basic and acidic residues) spans 1019 to 1035 (GSKDTKRTADPNNKREN). Positions 1135 to 1145 (GEEEAEAEPIN) are enriched in acidic residues. Residues 1178–1486 (TIRKTCYRIV…KKYYNAMKKL (309 aa)) form an III repeat. Residues 1186–1210 (IVEHSWFESFIVLMILLSSGALAFE) traverse the membrane as a helical segment. Residues 1211 to 1222 (DIYIEKKKTIKI) are Extracellular-facing. A helical membrane pass occupies residues 1223–1248 (ILEYADKIFTYIFILEMLLKWVAYGY). Topologically, residues 1249 to 1250 (KT) are cytoplasmic. A helical transmembrane segment spans residues 1251–1276 (YFTNAWCWLDFLIVDVSLVTLVANTL). Residues 1277-1285 (GYSDLGPIK) lie on the Extracellular side of the membrane. The helical transmembrane segment at 1286-1302 (SLRTLRALRPLRALSRF) threads the bilayer. Residues 1303–1315 (EGMRVVVNALIGA) are Cytoplasmic-facing. The chain crosses the membrane as a helical span at residues 1316-1340 (IPSIMNVLLVCLIFWLIFSIMGVNL). Topologically, residues 1341 to 1392 (FAGKFYECVNTTDGSRFSVSQVANRSECFALMNVSGNVRWKNLKVNFDNVGL) are extracellular. Cys-1348 and Cys-1368 form a disulfide bridge. Positions 1393-1403 (GYLSLLQVATF) form an intramembrane region, pore-forming. The Extracellular portion of the chain corresponds to 1404–1429 (KGWMDIMYAAVDSVNVNAQPIYEYNL). A helical membrane pass occupies residues 1430–1455 (YMYIYFVIFIIFGSFFTLNLFIGVII). At 1456 to 1512 (DNFNQQKKKLGGQDIFMTEEQKKYYNAMKKLGSKKPQKPIPRPGNKFQGCIFDLVTN) the chain is on the cytoplasmic side. The residue at position 1488 (Ser-1488) is a Phosphoserine; by PKC. The stretch at 1495–1793 (IPRPGNKFQG…WEKFDPDATQ (299 aa)) is one IV repeat. Residues 1513-1532 (QAFDITIMVLICLNMVTMMV) form a helical membrane-spanning segment. Residues 1533 to 1543 (EKEGQTDYMSF) are Extracellular-facing. Residues 1544–1565 (VLYWINVVFIILFTGECVLKLI) form a helical membrane-spanning segment. Topologically, residues 1566–1574 (SLRHYYFTV) are cytoplasmic. Residues 1575 to 1596 (GWNIFDFVVVILSIVGMFLAEM) traverse the membrane as a helical segment. Residues 1597 to 1605 (IEKYFVSPT) lie on the Extracellular side of the membrane. A helical membrane pass occupies residues 1606–1625 (LFRVIRLARIGRILRLIKGA). Topologically, residues 1626–1638 (KGIRTLLFALMMS) are cytoplasmic. The chain crosses the membrane as a helical span at residues 1639–1661 (LPALFNIGLLLFLVMFIYAIFGM). The Extracellular portion of the chain corresponds to 1662–1684 (SNFAYVKKEAGINDMFNFETFGN). Residues 1685–1697 (SMICLFQITTSAG) constitute an intramembrane region (pore-forming). Residues 1698-1731 (WDGLLAPILNSAPPDCDPKKVHPGSSVEGDCGNP) are Extracellular-facing. A disulfide bond links Cys-1713 and Cys-1728. A helical membrane pass occupies residues 1732 to 1757 (SVGIFYFVSYIIISFLVVVNMYIAVI). Residues 1758–1984 (LENFSVATEE…EDKEKDESRK (227 aa)) are Cytoplasmic-facing. The 30-residue stretch at 1887 to 1916 (EDVSATIIQRAYRRYRLRQNVKNISSIYIK) folds into the IQ domain. The interval 1933-1984 (DNVNENSSPEKTDATASTISPPSYDSVTKPDQEKYETDKTEKEDKEKDESRK) is disordered. The span at 1946 to 1958 (ATASTISPPSYDS) shows a compositional bias: polar residues. A compositionally biased stretch (basic and acidic residues) spans 1960–1984 (TKPDQEKYETDKTEKEDKEKDESRK).

This sequence belongs to the sodium channel (TC 1.A.1.10) family. Nav1.7/SCN9A subfamily. In terms of assembly, the Nav1.7 voltage-gated sodium channel consists of an ion-conducting alpha subunit SCN9A which is functional on its own regulated by one or more beta-1 (SCN1B), beta-2 (SCN2B), beta-3 (SCN3B) and beta-4 (SCN4B) subunits. SCN1B and SCN3B are non-covalently associated with SCN9A. SCN2B and SCN4B are disulfide-linked to SCN9A. SCN1B regulates channel inactivation. Interacts with NEDD4 and NEDD4L; regulates Nav1.7 activity most probably through ubiquitination and subsequent endocytosis. Interacts with TMEM233; modulates the gating properties of NaV1.7. Ubiquitinated by NEDD4L; which may promote its endocytosis. In terms of processing, phosphorylation at Ser-1488 by PKC in a highly conserved cytoplasmic loop increases peak sodium currents. As to expression, expressed strongly in sciatic nerves, with moderate levels in kidney. Not detected in liver, brain and muscle.

It localises to the cell membrane. It is found in the cell projection. Its subcellular location is the neuron projection. The protein resides in the axon. It carries out the reaction Na(+)(in) = Na(+)(out). Pore-forming subunit of Nav1.7, a voltage-gated sodium (Nav) channel that directly mediates the depolarizing phase of action potentials in excitable membranes. Navs, also called VGSCs (voltage-gated sodium channels) or VDSCs (voltage-dependent sodium channels), operate by switching between closed and open conformations depending on the voltage difference across the membrane. In the open conformation they allow Na(+) ions to selectively pass through the pore, along their electrochemical gradient. The influx of Na(+) ions provokes membrane depolarization, initiating the propagation of electrical signals throughout cells and tissues. Nav1.7 plays a crucial role in controlling the excitability and action potential propagation from nociceptor neurons, thereby contributing to the sensory perception of pain. The protein is Sodium channel protein type 9 subunit alpha of Mus musculus (Mouse).